The chain runs to 334 residues: MFNGKNILITGGTGSFGKTYTKVLLENYKPNKIIIYSRDELKQFEMSSIFNSNCMRYFIGDVRDKERLSVAMRDVDFVIHAAAMKHVPVAEYNPMECIKTNIHGAQNVIDACFENGVKKCIALSTDKACNPVNLYGATKLASDKLFVAANNIAGNKQTRFSVTRYGNVVGSRGSVVPFFKKLIAQGSKELPITDTRMTRFWISLEDGVKFVLSNFERMHGGEIFIPKIPSMKITNLAHALAPNLSHKIIGIRAGEKLHEIMISSDDSHLTYEFENYYAISPSIKLVDQESDFSINALGEKGQKVKDGFSYSSDNNPQWASEKELLDIINHTEGF.

Residues 13 to 16 (TGSF), 37 to 42 (SRDELK), 61 to 62 (DV), Ala81, Lys85, and 123 to 124 (LS) each bind NADP(+). Lys85 provides a ligand contact to substrate. Lys127 is a catalytic residue. Tyr135 and Lys139 together coordinate NADP(+). Residue Asn167 coordinates substrate. 168 to 172 (VVGSR) is an NADP(+) binding site. Substrate-binding residues include Val175, Thr193, Arg252, and Glu255.

It belongs to the polysaccharide synthase family. As to quaternary structure, homohexamer. The cofactor is NADP(+).

The catalysed reaction is UDP-N-acetyl-alpha-D-glucosamine = UDP-2-acetamido-2,6-dideoxy-beta-L-arabino-hex-4-ulose + H2O. Functionally, catalyzes the first step in the biosynthesis of pseudaminic acid, a sialic-acid-like sugar that is used to modify flagellin. Has both C6 dehydratase and C5 epimerase activities that result in the production of both UDP-2-acetamido-2,6-dideoxy-beta-L-arabino-4-hexulose and UDP-2-acetamido-2,6-dideoxy-alpha-D-xylo-4-hexulose. The chain is UDP-N-acetylglucosamine 4,6-dehydratase (inverting) (pseB) from Campylobacter jejuni subsp. jejuni serotype O:23/36 (strain 81-176).